A 114-amino-acid chain; its full sequence is uncharacterized protein (114 aa).

This is an uncharacterized protein from Saccharomyces cerevisiae (strain ATCC 204508 / S288c) (Baker's yeast).